The chain runs to 667 residues: UvrABC system protein B (667 aa).

One can recognise a Helicase ATP-binding domain in the interval 28–185; sequence NNFKQGLKEQ…NKLIELKYQR (158 aa). An ATP-binding site is contributed by 41–48; sequence GATGTGKT. The short motif at 94 to 117 is the Beta-hairpin element; sequence YYDYYQPEAYVASSDTYIEKDSKI. Residues 432 to 594 enclose the Helicase C-terminal domain; sequence QMDDLYFEIK…VTPTALNKTI (163 aa). Positions 629–664 constitute a UVR domain; it reads NKEIKRLQKTMKEAAKALDFEKAATLRDLILDLEKK.

It belongs to the UvrB family. Forms a heterotetramer with UvrA during the search for lesions. Interacts with UvrC in an incision complex.

It localises to the cytoplasm. The UvrABC repair system catalyzes the recognition and processing of DNA lesions. A damage recognition complex composed of 2 UvrA and 2 UvrB subunits scans DNA for abnormalities. Upon binding of the UvrA(2)B(2) complex to a putative damaged site, the DNA wraps around one UvrB monomer. DNA wrap is dependent on ATP binding by UvrB and probably causes local melting of the DNA helix, facilitating insertion of UvrB beta-hairpin between the DNA strands. Then UvrB probes one DNA strand for the presence of a lesion. If a lesion is found the UvrA subunits dissociate and the UvrB-DNA preincision complex is formed. This complex is subsequently bound by UvrC and the second UvrB is released. If no lesion is found, the DNA wraps around the other UvrB subunit that will check the other stand for damage. The protein is UvrABC system protein B of Aster yellows witches'-broom phytoplasma (strain AYWB).